We begin with the raw amino-acid sequence, 480 residues long: Argininosuccinate lyase (480 aa).

Residues 1-20 form a disordered region; sequence MTQQDGGQAGQAEPTKLWGG.

This sequence belongs to the lyase 1 family. Argininosuccinate lyase subfamily.

The protein localises to the cytoplasm. The enzyme catalyses 2-(N(omega)-L-arginino)succinate = fumarate + L-arginine. It participates in amino-acid biosynthesis; L-arginine biosynthesis; L-arginine from L-ornithine and carbamoyl phosphate: step 3/3. This chain is Argininosuccinate lyase, found in Saccharopolyspora erythraea (strain ATCC 11635 / DSM 40517 / JCM 4748 / NBRC 13426 / NCIMB 8594 / NRRL 2338).